A 455-amino-acid chain; its full sequence is 2-oxoisovalerate dehydrogenase subunit alpha, mitochondrial (455 aa).

A mitochondrion-targeting transit peptide spans 1–55 (MQGSAKMAMAVAVAVARVWRPSRGLGRTGLPLLRLLGARGLARFHPHRWQQQQHF). The thiamine diphosphate site is built by Tyr-168 and Arg-169. Ser-216 contributes to the K(+) binding site. Ser-217 is a binding site for thiamine diphosphate. K(+) contacts are provided by Pro-218, Thr-221, and Gln-222. Position 248 (Glu-248) interacts with Mg(2+). Thiamine diphosphate contacts are provided by Gly-249, Ala-250, and Arg-275. Residues Asn-277 and Tyr-279 each contribute to the Mg(2+) site. His-346 lines the thiamine diphosphate pocket. Position 347 is a phosphoserine; by BCKDK (Ser-347). Thr-348 carries the post-translational modification Phosphothreonine. A phosphoserine mark is found at Ser-349 and Ser-357. Lys-366 bears the N6-acetyllysine; alternate mark. An N6-succinyllysine; alternate modification is found at Lys-366. Lys-390 carries the post-translational modification N6-succinyllysine.

The protein belongs to the BCKDHA family. Heterotetramer of 2 alpha/BCKDHA and 2 beta chains/BCKDHB that forms the branched-chain alpha-keto acid decarboxylase (E1) component of the BCKD complex. The branched-chain alpha-ketoacid dehydrogenase is a large complex composed of three major building blocks E1, E2 and E3. It is organized around E2, a 24-meric cubic core composed of DBT, to which are associated 6 to 12 copies of E1, and approximately 6 copies of the dehydrogenase E3, a DLD dimer. Interacts with PPM1K. Thiamine diphosphate serves as cofactor. Requires Mg(2+) as cofactor. In terms of processing, phosphorylated at Ser-347 by BCKDK and dephosphorylated by protein phosphatase PPM1K. As to expression, expressed in kidney (at protein level).

Its subcellular location is the mitochondrion matrix. The enzyme catalyses N(6)-[(R)-lipoyl]-L-lysyl-[protein] + 3-methyl-2-oxobutanoate + H(+) = N(6)-[(R)-S(8)-2-methylpropanoyldihydrolipoyl]-L-lysyl-[protein] + CO2. Its function is as follows. Together with BCKDHB forms the heterotetrameric E1 subunit of the mitochondrial branched-chain alpha-ketoacid dehydrogenase (BCKD) complex. The BCKD complex catalyzes the multi-step oxidative decarboxylation of alpha-ketoacids derived from the branched-chain amino-acids valine, leucine and isoleucine producing CO2 and acyl-CoA which is subsequently utilized to produce energy. The E1 subunit catalyzes the first step with the decarboxylation of the alpha-ketoacid forming an enzyme-product intermediate. A reductive acylation mediated by the lipoylamide cofactor of E2 extracts the acyl group from the E1 active site for the next step of the reaction. The sequence is that of 2-oxoisovalerate dehydrogenase subunit alpha, mitochondrial (BCKDHA) from Bos taurus (Bovine).